Here is a 229-residue protein sequence, read N- to C-terminus: NAD-dependent protein deacetylase (229 aa).

One can recognise a Deacetylase sirtuin-type domain in the interval 1–229; sequence MNKLNEALKK…SDAVKVFEEI (229 aa). Ala20, Arg32, Gln96, Ile98, Asp99, His114, Thr181, Ser182, Asn205, and Val223 together coordinate NAD(+). Residues Ile98 and Asp99 each coordinate nicotinamide. Catalysis depends on His114, which acts as the Proton acceptor.

Belongs to the sirtuin family. Class U subfamily.

It localises to the cytoplasm. It catalyses the reaction N(6)-acetyl-L-lysyl-[protein] + NAD(+) + H2O = 2''-O-acetyl-ADP-D-ribose + nicotinamide + L-lysyl-[protein]. NAD-dependent protein deacetylase which modulates the activities of several enzymes which are inactive in their acetylated form. The chain is NAD-dependent protein deacetylase from Listeria monocytogenes serovar 1/2a (strain ATCC BAA-679 / EGD-e).